Consider the following 408-residue polypeptide: Putative odorant receptor 92a (408 aa).

At Met-1 to Tyr-52 the chain is on the cytoplasmic side. The chain crosses the membrane as a helical span at residues Leu-53–Val-73. A topological domain (extracellular) is located at residue His-74. A helical transmembrane segment spans residues Ile-75–Phe-95. The Cytoplasmic segment spans residues Met-96–Val-144. Residues Met-145 to Ile-165 form a helical membrane-spanning segment. The Extracellular segment spans residues Lys-166–His-209. Residues Cys-210 to Thr-230 form a helical membrane-spanning segment. Residues Gln-231–Glu-276 are Cytoplasmic-facing. The helical transmembrane segment at Val-277 to Phe-301 threads the bilayer. The Extracellular segment spans residues Gln-302–Asp-310. A helical membrane pass occupies residues Ile-311–Tyr-331. Residues Gly-332–Pro-378 are Cytoplasmic-facing. A helical transmembrane segment spans residues Thr-379–Phe-399. At Ala-400–Gly-408 the chain is on the extracellular side.

Belongs to the insect chemoreceptor superfamily. Heteromeric odorant receptor channel (TC 1.A.69) family. Or49a subfamily. As to quaternary structure, interacts with Orco. Complexes exist early in the endomembrane system in olfactory sensory neurons (OSNs), coupling these complexes to the conserved ciliary trafficking pathway.

It localises to the cell membrane. In terms of biological role, odorant receptor which mediates acceptance or avoidance behavior, depending on its substrates. The odorant receptor repertoire encodes a large collection of odor stimuli that vary widely in identity, intensity, and duration. May form a complex with Orco to form odorant-sensing units, providing sensitive and prolonged odorant signaling and calcium permeability. In Drosophila melanogaster (Fruit fly), this protein is Putative odorant receptor 92a (Or92a).